Here is a 472-residue protein sequence, read N- to C-terminus: Uronate isomerase (472 aa).

Belongs to the metallo-dependent hydrolases superfamily. Uronate isomerase family.

It catalyses the reaction D-glucuronate = D-fructuronate. The enzyme catalyses aldehydo-D-galacturonate = keto-D-tagaturonate. The protein operates within carbohydrate metabolism; pentose and glucuronate interconversion. The chain is Uronate isomerase from Xanthomonas oryzae pv. oryzae (strain MAFF 311018).